The following is a 299-amino-acid chain: Tyrosine recombinase XerC (299 aa).

The Core-binding (CB) domain occupies 2–88 (SALQPLIDTY…ALRSFLDYLV (87 aa)). Residues 109–289 (PLPKNVSVDD…DFQHLSKIYD (181 aa)) form the Tyr recombinase domain. Residues Arg-148, Lys-172, His-241, Arg-244, and His-267 contribute to the active site. The active-site O-(3'-phospho-DNA)-tyrosine intermediate is the Tyr-276.

It belongs to the 'phage' integrase family. XerC subfamily. In terms of assembly, forms a cyclic heterotetrameric complex composed of two molecules of XerC and two molecules of XerD.

The protein localises to the cytoplasm. Its function is as follows. Site-specific tyrosine recombinase, which acts by catalyzing the cutting and rejoining of the recombining DNA molecules. The XerC-XerD complex is essential to convert dimers of the bacterial chromosome into monomers to permit their segregation at cell division. It also contributes to the segregational stability of plasmids. In Psychromonas ingrahamii (strain DSM 17664 / CCUG 51855 / 37), this protein is Tyrosine recombinase XerC.